A 460-amino-acid polypeptide reads, in one-letter code: Sorting nexin-4 (460 aa).

Over residues 1 to 16 the composition is skewed to polar residues; the sequence is MTATEQQQDDFSNVSW. Positions 1 to 53 are disordered; that stretch reads MTATEQQQDDFSNVSWSEHVHDQQTRSVPDAEEPGHDMNAPGTGLERDAPSLG. A PX domain is found at 56 to 178; it reads KLECTVDTPI…TFLESPDWNA (123 aa). 3 coiled-coil regions span residues 238-266, 306-337, and 374-403; these read EKVIARVARREADLEVDLRDLAEQFQKLI, RDMQAYSIALKNLLKAREQKQLDYEQLTEYLN, and QARRERTRKLELRVEELTHEVESARKTSDM.

It belongs to the sorting nexin family. As to quaternary structure, forms a complex with ATG20 and ATG17.

It localises to the cytoplasm. The protein resides in the membrane. Its subcellular location is the endosome membrane. Sorting nexin involved in the separation or division of vacuoles throughout the entire life cycle of the cells. Involved in retrieval of late-Golgi SNAREs from post-Golgi endosomes to the trans-Golgi network, for cytoplasm to vacuole transport (Cvt), and autophagy of large cargos including mitophagy, pexophagy and glycophagy. Autophagy is required for proper vegetative growth, asexual/sexual reproduction, and full virulence. Autophagy is particularly involved in the biosynthesis of deoxynivalenol (DON), an important virulence determinant. The protein is Sorting nexin-4 of Gibberella zeae (strain ATCC MYA-4620 / CBS 123657 / FGSC 9075 / NRRL 31084 / PH-1) (Wheat head blight fungus).